We begin with the raw amino-acid sequence, 389 residues long: Lipopolysaccharide assembly protein B (389 aa).

The helical transmembrane segment at 1-20 (MLELLFLLLPVAAAYGWYMG) threads the bilayer. Topologically, residues 21 to 389 (RRSAQQNKQD…IKPIRGLDGL (369 aa)) are cytoplasmic. TPR repeat units lie at residues 35–68 (LSRD…DTGT), 69–102 (VEAH…ASLT), 107–140 (LLAI…TDFR), 142–174 (GALQ…GKDK), 180–213 (AHFY…DKNS), 214–247 (ARVS…DREL), and 249–282 (SETL…NTGA). Residues Cys357, Cys360, Cys371, and Cys374 each coordinate Fe cation.

This sequence belongs to the LapB family.

The protein localises to the cell inner membrane. In terms of biological role, modulates cellular lipopolysaccharide (LPS) levels by regulating LpxC, which is involved in lipid A biosynthesis. May act by modulating the proteolytic activity of FtsH towards LpxC. May also coordinate assembly of proteins involved in LPS synthesis at the plasma membrane. The protein is Lipopolysaccharide assembly protein B of Escherichia coli O157:H7.